The chain runs to 1060 residues: Carbamoyl phosphate synthase large chain (1060 aa).

A carboxyphosphate synthetic domain region spans residues 1–401 (MPKRTDIRKI…SLLKACRSLE (401 aa)). Positions 129, 169, 175, 176, 208, 210, 215, 241, 242, 243, 284, and 298 each coordinate ATP. The 195-residue stretch at 133-327 (KQLMEELNQP…IAKLAAKIAV (195 aa)) folds into the ATP-grasp 1 domain. Residues Gln-284, Glu-298, and Asn-300 each contribute to the Mg(2+) site. Mn(2+) contacts are provided by Gln-284, Glu-298, and Asn-300. Residues 402 to 546 (IGVDHIKIAD…YSTYAVENES (145 aa)) form an oligomerization domain region. A carbamoyl phosphate synthetic domain region spans residues 547-929 (LISDKASILV…ALYKAFEAAY (383 aa)). One can recognise an ATP-grasp 2 domain in the interval 671-861 (EATLQALNIP…MAQVATKVIL (191 aa)). Arg-707, Ala-746, Leu-748, Glu-752, Gly-777, Val-778, His-779, Ser-780, Gln-820, and Glu-832 together coordinate ATP. 3 residues coordinate Mg(2+): Gln-820, Glu-832, and Asn-834. Mn(2+) contacts are provided by Gln-820, Glu-832, and Asn-834. The region spanning 930 to 1060 (LHMPDYGNIV…SRAFTLKVLD (131 aa)) is the MGS-like domain. The interval 930-1060 (LHMPDYGNIV…SRAFTLKVLD (131 aa)) is allosteric domain.

The protein belongs to the CarB family. Composed of two chains; the small (or glutamine) chain promotes the hydrolysis of glutamine to ammonia, which is used by the large (or ammonia) chain to synthesize carbamoyl phosphate. Tetramer of heterodimers (alpha,beta)4. It depends on Mg(2+) as a cofactor. The cofactor is Mn(2+).

The catalysed reaction is hydrogencarbonate + L-glutamine + 2 ATP + H2O = carbamoyl phosphate + L-glutamate + 2 ADP + phosphate + 2 H(+). The enzyme catalyses hydrogencarbonate + NH4(+) + 2 ATP = carbamoyl phosphate + 2 ADP + phosphate + 2 H(+). It participates in amino-acid biosynthesis; L-arginine biosynthesis; carbamoyl phosphate from bicarbonate: step 1/1. Its pathway is pyrimidine metabolism; UMP biosynthesis via de novo pathway; (S)-dihydroorotate from bicarbonate: step 1/3. In terms of biological role, large subunit of the glutamine-dependent carbamoyl phosphate synthetase (CPSase). CPSase catalyzes the formation of carbamoyl phosphate from the ammonia moiety of glutamine, carbonate, and phosphate donated by ATP, constituting the first step of 2 biosynthetic pathways, one leading to arginine and/or urea and the other to pyrimidine nucleotides. The large subunit (synthetase) binds the substrates ammonia (free or transferred from glutamine from the small subunit), hydrogencarbonate and ATP and carries out an ATP-coupled ligase reaction, activating hydrogencarbonate by forming carboxy phosphate which reacts with ammonia to form carbamoyl phosphate. The sequence is that of Carbamoyl phosphate synthase large chain from Streptococcus agalactiae serotype Ia (strain ATCC 27591 / A909 / CDC SS700).